The primary structure comprises 262 residues: Nurim (262 aa).

Over 1–4 the chain is Nuclear; the sequence is MAPA. The chain crosses the membrane as a helical span at residues 5–28; the sequence is LLLIPAALASFILAFGTGVEFVRF. Topologically, residues 29–58 are perinuclear space; sequence TSLRPLLGRISESGSPDARQGWLAALQDQS. A helical membrane pass occupies residues 59-80; the sequence is ILVPLVWDLGLLLLFVGQHSLM. Over 81–97 the chain is Nuclear; the sequence is ATETVKEWMSRYFGVLQ. Residues 98–114 form a helical membrane-spanning segment; sequence RSLYVACTALALQLVMR. Topologically, residues 115 to 133 are perinuclear space; it reads YWEPVPRGPVLWETRTEPW. Residues 134–164 traverse the membrane as a helical segment; that stretch reads ATWVPLLCFVLHVISWLLIFSILLVFDYAEL. At 165 to 191 the chain is on the nuclear side; it reads MGLKQVYYHVLGLGEPLALKSPRALRL. Residues 192-210 form a helical membrane-spanning segment; that stretch reads FSHLRHPVCVELLTVLWVV. Over 211 to 216 the chain is Perinuclear space; sequence PTLGTD. The helical transmembrane segment at 217–234 threads the bilayer; sequence RLLLALLLTLYLGLAHGL. Residues 235–262 lie on the Nuclear side of the membrane; it reads DQHDLRYLRAQLQRKLHLLSRPQDGEAE.

This sequence belongs to the nurim family.

It localises to the nucleus inner membrane. The polypeptide is Nurim (NRM) (Bos taurus (Bovine)).